Reading from the N-terminus, the 687-residue chain is A-kinase anchor protein 8 (687 aa).

The segment at 1-195 is interaction with MCM2; the sequence is MEQSYGGYGA…FLRGRGQGRF (195 aa). Positions 1–210 are interaction with DPY30; that stretch reads MEQSYGGYGA…SSTFIRSDPF (210 aa). A Phosphoserine modification is found at serine 72. The interval 104-124 is disordered; sequence SKEGGRGGISSGGEGMQDRDS. The residue at position 109 (arginine 109) is an Asymmetric dimethylarginine; alternate. Arginine 109 carries the post-translational modification Omega-N-methylarginine; alternate. Residues 109 to 118 show a composition bias toward gly residues; that stretch reads RGGISSGGEG. Residues 109–201 are interaction with DDX5; it reads RGGISSGGEG…QGRFQDRSNS (93 aa). Residues 127–152 form a nuclear matrix targeting site region; that stretch reads RFQPYESYDSRPCMPEHTPYRPSYSY. Positions 189 to 221 are disordered; that stretch reads GRGQGRFQDRSNSSTFIRSDPFMPPSASSEPLS. Phosphoserine is present on serine 199. 2 positions are modified to omega-N-methylarginine: arginine 233 and arginine 277. The disordered stretch occupies residues 278–380; the sequence is SQTRIRDWPR…KQRRRDRMRD (103 aa). 2 stretches are compositionally biased toward basic and acidic residues: residues 281-295 and 312-321; these read RIRDWPRRRGFERFG and PDAKLARADS. The Bipartite nuclear localization signal motif lies at 287 to 304; it reads RRRGFERFGPDNMGRKRK. Lysine 315 participates in a covalent cross-link: Glycyl lysine isopeptide (Lys-Gly) (interchain with G-Cter in SUMO2). Serine 321, serine 326, and serine 337 each carry phosphoserine. Positions 322–332 are enriched in acidic residues; it reads EGDLSENDDGA. Basic and acidic residues predominate over residues 336–358; the sequence is RSGDEEFRGEDDLCDSRKQRGEK. An involved in chromatin-binding region spans residues 385-448; the sequence is RIQFACSVCK…NKKIEKRRQE (64 aa). 2 consecutive C2H2 AKAP95-type zinc fingers follow at residues 390–412 and 479–502; these read CSVCKFRSFEDEEIQKHLQSKFH and CLACDMLIPAQHQLLQRHLHSVDH. The tract at residues 523–565 is involved in condensin complex recruitment; the sequence is SVLNNKHIVKMLEKYLKGEDPFVNETADLETEGDENLGEEKET. Threonine 553 bears the Phosphothreonine mark. A Glycyl lysine isopeptide (Lys-Gly) (interchain with G-Cter in SUMO2) cross-link involves residue lysine 563. The RII-binding stretch occupies residues 568–585; sequence EVAAEVLAEVITAAVKAV. Positions 572–589 are required for interaction with MYCBP; sequence EVLAEVITAAVKAVEGDG. Positions 606–687 are disordered; it reads VDTAEAGSDS…DAEAKDTPTE (82 aa). Residues 633–648 are compositionally biased toward basic and acidic residues; the sequence is RNMEDMARGEAAEARN. Positions 649–666 are enriched in low complexity; the sequence is EAAVPAAAAGSPVPVIAI. Residue serine 659 is modified to Phosphoserine.

It belongs to the AKAP95 family. As to quaternary structure, binds to dimeric RII-alpha regulatory subunit of PKA during mitosis. Interacts (via C-terminus) with FIGN. Interacts with NCAPD2, CCND1, CCND3, MCM2, RPS6KA1, PDE4A, CASP3. Interacts with DDX5, CCNE1. Interacts with NFKB1; detetcted in the cytoplasm. Interacts with MYCBP; MYCBP is translocated to the nucleus and the interaction prevents the association of the PKA catalytic subunit leading to suppression of PKA activity. Interacts with DPY30; mediating AKAP8 association with at least the MLL4/WBP7 HMT complex. Interacts with HDAC3; increased during mitosis. Interacts with GJA1; in the nucleus and in the nuclear membrane; the nuclear association increases with progress of cell cycle G1, S and G2 phase and decreases in M phase. Post-translationally, phosphorylated on tyrosine residues probably by SRC subfamily protein kinases; multiple phosphorylation is leading to dissociation from nuclear structures implicated in chromatin structural changes. As to expression, widely expressed. The protein has been detected in liver, fibroblasts, granulosa, myoblast, lymphoma and Sertoli cells.

The protein resides in the nucleus matrix. It localises to the nucleus. It is found in the nucleolus. Its subcellular location is the cytoplasm. Functionally, anchoring protein that mediates the subcellular compartmentation of cAMP-dependent protein kinase (PKA type II). Acts as an anchor for a PKA-signaling complex onto mitotic chromosomes, which is required for maintenance of chromosomes in a condensed form throughout mitosis. Recruits condensin complex subunit NCAPD2 to chromosomes required for chromatin condensation; the function appears to be independent from PKA-anchoring. May help to deliver cyclin D/E to CDK4 to facilitate cell cycle progression. Required for cell cycle G2/M transition and histone deacetylation during mitosis. In mitotic cells recruits HDAC3 to the vicinity of chromatin leading to deacetylation and subsequent phosphorylation at 'Ser-10' of histone H3; in this function may act redundantly with AKAP8L. Involved in nuclear retention of RPS6KA1 upon ERK activation thus inducing cell proliferation. May be involved in regulation of DNA replication by acting as scaffold for MCM2. Enhances HMT activity of the KMT2 family MLL4/WBP7 complex and is involved in transcriptional regulation. In a teratocarcinoma cell line is involved in retinoic acid-mediated induction of developmental genes implicating H3 'Lys-4' methylation. May be involved in recruitment of active CASP3 to the nucleus in apoptotic cells. May act as a carrier protein of GJA1 for its transport to the nucleus. May play a repressive role in the regulation of rDNA transcription. Preferentially binds GC-rich DNA in vitro. In cells, associates with ribosomal RNA (rRNA) chromatin, preferentially with rRNA promoter and transcribed regions. Involved in modulation of Toll-like receptor signaling. Required for the cAMP-dependent suppression of TNF-alpha in early stages of LPS-induced macrophage activation; the function probably implicates targeting of PKA to NFKB1. This is A-kinase anchor protein 8 (Akap8) from Rattus norvegicus (Rat).